Consider the following 378-residue polypeptide: Acetylornithine deacetylase (378 aa).

His-76 contributes to the Zn(2+) binding site. Asp-78 is a catalytic residue. Residue Asp-108 coordinates Zn(2+). Glu-140 is a catalytic residue. The Zn(2+) site is built by Glu-141, Glu-165, and His-351.

It belongs to the peptidase M20A family. ArgE subfamily. Homodimer. Zn(2+) is required as a cofactor. Co(2+) serves as cofactor. It depends on glutathione as a cofactor.

It localises to the cytoplasm. It catalyses the reaction N(2)-acetyl-L-ornithine + H2O = L-ornithine + acetate. The protein operates within amino-acid biosynthesis; L-arginine biosynthesis; L-ornithine from N(2)-acetyl-L-ornithine (linear): step 1/1. Catalyzes the hydrolysis of the amide bond of N(2)-acetylated L-amino acids. Cleaves the acetyl group from N-acetyl-L-ornithine to form L-ornithine, an intermediate in L-arginine biosynthesis pathway, and a branchpoint in the synthesis of polyamines. The polypeptide is Acetylornithine deacetylase (Vibrio atlanticus (strain LGP32) (Vibrio splendidus (strain Mel32))).